We begin with the raw amino-acid sequence, 475 residues long: Tetratricopeptide repeat protein 29 (475 aa).

TPR repeat units follow at residues 92 to 131 (DALR…EDAE), 136 to 173 (FEDV…AQLI), 182 to 215 (AEAH…TQGR), 234 to 267 (LRTY…AKEG), 274 to 307 (AEAS…STDL), 314 to 347 (GRGY…ARNN), and 354 to 387 (VRAS…TVEL). A disordered region spans residues 437 to 475 (IEPDPVTEEFRGSTVEAVSQNSERLEELSRFPGDQKNET). The span at 459 to 475 (ERLEELSRFPGDQKNET) shows a compositional bias: basic and acidic residues.

In terms of tissue distribution, expressed in spermatozoa (at protein level).

The protein resides in the cytoplasm. The protein localises to the cytoskeleton. Its subcellular location is the flagellum axoneme. In terms of biological role, axonemal protein which is implicated in axonemal and/or peri-axonemal structure assembly and regulates flagellum assembly and beating and therefore sperm motility. The polypeptide is Tetratricopeptide repeat protein 29 (TTC29) (Homo sapiens (Human)).